The sequence spans 355 residues: Guanine nucleotide-binding protein G(z) subunit alpha (355 aa).

The span at 1–14 shows a compositional bias: basic and acidic residues; the sequence is MGCRQSSEEKEAAR. The disordered stretch occupies residues 1–26; that stretch reads MGCRQSSEEKEAARRSRRIDRHLRSE. Gly2 carries N-myristoyl glycine lipidation. Residue Cys3 is the site of S-palmitoyl cysteine attachment. Residues 32-355 form the G-alpha domain; that stretch reads REIKLLLLGT…QNNLKYIGLC (324 aa). The interval 35-48 is G1 motif; the sequence is KLLLLGTSNSGKST. Residues 40 to 47, 176 to 182, 201 to 205, 270 to 273, and Ala327 contribute to the GTP site; these read GTSNSGKS, LRSRDMT, DVGGQ, and NKKD. Residue Ser47 participates in Mg(2+) binding. Residues 174–182 form a G2 motif region; it reads DILRSRDMT. ADP-ribosylarginine; by cholera toxin is present on Arg179. Thr182 serves as a coordination point for Mg(2+). Positions 197-206 are G3 motif; it reads FKMVDVGGQR. A G4 motif region spans residues 266–273; sequence ILFLNKKD. The tract at residues 325–330 is G5 motif; it reads TCATDT.

This sequence belongs to the G-alpha family. G(i/o/t/z) subfamily. G-proteins are composed of 3 units; alpha, beta and gamma. The alpha chain contains the guanine nucleotide binding site. Interacts with ADGRB2.

Its subcellular location is the membrane. Functionally, guanine nucleotide-binding proteins (G proteins) are involved as modulators or transducers in various transmembrane signaling systems. In Homo sapiens (Human), this protein is Guanine nucleotide-binding protein G(z) subunit alpha (GNAZ).